Reading from the N-terminus, the 226-residue chain is Xanthocillin biosynthesis cluster protein F (226 aa).

The protein operates within secondary metabolite biosynthesis. Part of the gene cluster that mediates the biosynthesis of the isocyanide xanthocillin and its derivatives. The first step of the pathway consists in the conversion of tyrosine into a vinyl-isonitrile intermediate by the isocyanide synthase xanB. Subsequent oxidative dimerization of this intermediate to form xanthocillin may involve the cytochrome P450 monooxygenase xanG, whose expression is coregulated with that of XanB. Xanthocillin can be further modified by the isonitrile hydratase-like protein xanA which introduces N-formyl groups and the methyltransferase xanE which introduces methyl groups, leading to the production of several derivatives including fumiformamide. Finally, fumiformamide can be subject to both oxidative and reductive cyclization to yield melanocins E and F, respectively. This is Xanthocillin biosynthesis cluster protein F from Aspergillus fumigatus (strain ATCC MYA-4609 / CBS 101355 / FGSC A1100 / Af293) (Neosartorya fumigata).